Reading from the N-terminus, the 172-residue chain is 3-phenylpropionate/cinnamic acid dioxygenase subunit beta (172 aa).

This sequence belongs to the bacterial ring-hydroxylating dioxygenase beta subunit family. This dioxygenase system consists of four proteins: the two subunits of the hydroxylase component (HcaE and HcaF), a ferredoxin (HcaC) and a ferredoxin reductase (HcaD).

The catalysed reaction is 3-phenylpropanoate + NADH + O2 + H(+) = 3-(cis-5,6-dihydroxycyclohexa-1,3-dien-1-yl)propanoate + NAD(+). It carries out the reaction (E)-cinnamate + NADH + O2 + H(+) = (2E)-3-(cis-5,6-dihydroxycyclohexa-1,3-dien-1-yl)prop-2-enoate + NAD(+). It functions in the pathway aromatic compound metabolism; 3-phenylpropanoate degradation. Part of the multicomponent 3-phenylpropionate dioxygenase. Converts 3-phenylpropionic acid (PP) and cinnamic acid (CI) into 3-phenylpropionate-dihydrodiol (PP-dihydrodiol) and cinnamic acid-dihydrodiol (CI-dihydrodiol), respectively. This Escherichia coli O139:H28 (strain E24377A / ETEC) protein is 3-phenylpropionate/cinnamic acid dioxygenase subunit beta.